A 117-amino-acid chain; its full sequence is UPF0122 protein Teth514_1714 (117 aa).

This sequence belongs to the UPF0122 family.

Might take part in the signal recognition particle (SRP) pathway. This is inferred from the conservation of its genetic proximity to ftsY/ffh. May be a regulatory protein. The chain is UPF0122 protein Teth514_1714 from Thermoanaerobacter sp. (strain X514).